Reading from the N-terminus, the 306-residue chain is MKKKIAVLLGGNSSERKISIKSGYAILQSLLRSGFNAYAIDTRDFPIMQLKKQGFDSAYIALHGTGGEDGSIQGILEYLNIPYTGSGIMSSAISLDKWRTKLLWKSLSLRVLPDIYLQKKDISKYTYSYILKKILKLKFPVVIKPNNAGSSIGITIVNHPDLLIDSINLAFNYSNNIIIEKFLKGTEYTVSILNKKVLPPIKIITKNNFYDYSSKYIESSTEYICPSGLNYQKEEELKKIVEIAWNSLGCKGCGRIDAILDNKDKFWLLEINTIPGMTHRSLVPMAAKSIGISFDELILKILKINK.

Active-site residues include Glu15 and Ser150. Positions Lys101–Lys303 constitute an ATP-grasp domain. Ile134–Thr189 provides a ligand contact to ATP. Residues Asp257, Glu270, and Asn272 each contribute to the Mg(2+) site. Ser281 is a catalytic residue.

It belongs to the D-alanine--D-alanine ligase family. Mg(2+) is required as a cofactor. The cofactor is Mn(2+).

It localises to the cytoplasm. It catalyses the reaction 2 D-alanine + ATP = D-alanyl-D-alanine + ADP + phosphate + H(+). Its pathway is cell wall biogenesis; peptidoglycan biosynthesis. In terms of biological role, cell wall formation. This is D-alanine--D-alanine ligase from Buchnera aphidicola subsp. Schizaphis graminum (strain Sg).